Here is a 59-residue protein sequence, read N- to C-terminus: Large ribosomal subunit protein uL30 (59 aa).

Belongs to the universal ribosomal protein uL30 family. In terms of assembly, part of the 50S ribosomal subunit.

The polypeptide is Large ribosomal subunit protein uL30 (Herminiimonas arsenicoxydans).